Here is a 561-residue protein sequence, read N- to C-terminus: Dihydroxy-acid dehydratase (561 aa).

Residue Cys51 coordinates [2Fe-2S] cluster. Asp83 is a binding site for Mg(2+). A [2Fe-2S] cluster-binding site is contributed by Cys124. 2 residues coordinate Mg(2+): Asp125 and Lys126. Position 126 is an N6-carboxylysine (Lys126). A [2Fe-2S] cluster-binding site is contributed by Cys196. A Mg(2+)-binding site is contributed by Glu447. Ser473 serves as the catalytic Proton acceptor.

The protein belongs to the IlvD/Edd family. In terms of assembly, homodimer. [2Fe-2S] cluster serves as cofactor. The cofactor is Mg(2+).

It catalyses the reaction (2R)-2,3-dihydroxy-3-methylbutanoate = 3-methyl-2-oxobutanoate + H2O. It carries out the reaction (2R,3R)-2,3-dihydroxy-3-methylpentanoate = (S)-3-methyl-2-oxopentanoate + H2O. The protein operates within amino-acid biosynthesis; L-isoleucine biosynthesis; L-isoleucine from 2-oxobutanoate: step 3/4. It participates in amino-acid biosynthesis; L-valine biosynthesis; L-valine from pyruvate: step 3/4. Functionally, functions in the biosynthesis of branched-chain amino acids. Catalyzes the dehydration of (2R,3R)-2,3-dihydroxy-3-methylpentanoate (2,3-dihydroxy-3-methylvalerate) into 2-oxo-3-methylpentanoate (2-oxo-3-methylvalerate) and of (2R)-2,3-dihydroxy-3-methylbutanoate (2,3-dihydroxyisovalerate) into 2-oxo-3-methylbutanoate (2-oxoisovalerate), the penultimate precursor to L-isoleucine and L-valine, respectively. The polypeptide is Dihydroxy-acid dehydratase (Oceanobacillus iheyensis (strain DSM 14371 / CIP 107618 / JCM 11309 / KCTC 3954 / HTE831)).